We begin with the raw amino-acid sequence, 110 residues long: uncharacterized protein (110 aa).

It to M.jannaschii MJ0123 and A.aeolicus AA15.

This is an uncharacterized protein from Methanocaldococcus jannaschii (strain ATCC 43067 / DSM 2661 / JAL-1 / JCM 10045 / NBRC 100440) (Methanococcus jannaschii).